Consider the following 1070-residue polypeptide: MLGDGNGGMSTIPGFNQIQFEGFCRFIDQGLAEELYKFPKIEDRDQEIEFQLFVETYQLVEPSIKERDAVYESLTYSSELYVSGGLIWKNSRDMQEQTIFIGNIPLMNSLGTSIVNGIYRIVINQILQSPGIYYRSELNHNGISVYTGTIISDWGGRVELEIDKKARIWARVSRKQKISILVLSSAMGLNLREILENVCYPEIFLSFLSDKEKKKIGSRENAILEFYQQFTCVGGGPVFSESLCKELQKKFFQQRCELGRIGRLNMNQRLNLDIPHNNTFLLPRDILAAADHLIGMKFGMGTLDDMNHLKNKRIRSVADLLQDQFGLALIRLENVVRGTICGAIRHKLIPTPQNLVTSTPLTTTYESFFGLHPLSQVLDRTNPLTQIVHGRKSSYLGPGGLTGRTASFRIRDIHPSHYGRICPIDTSEGINVGLIGSLTIHAKIGHLGSLESPFYEISARSKKVRMLYLSPNRDEYYMIAAGNCLALNRGAREEQVVPARYRQEFLTIAWEQVRLRSFFPFQYFSIGASLIPFIEHNDANRALMSSNMQRQAVPLARSEKCIVGTGLERQVALDSGVPAIAEHEGKIIYTDIDKIILSGNGYTVSIPLVMYQRSNKNTCMHQKTQVQRGKCIKRGQVLADGAATVGGELALGKNILVAYMPWEGYNFEDAVLISERLVYEDVYTSFHIRKYEIQTHVTSQGPERITNEIPHLEAHLLRNLDKNGIVMLGSWVETGDILIGKLTPQLAKESSYAPEDRLLRAILGIQVSTSKETCLKLPTGGRGRVIDVRWIQKKGGSSYNPETIRVYILQKREIKVGDKVAGRHGNKGIISKILPRQDMPYLQDGGPVDMVFNPLGVPSRMNVGQIFECSLGLAGSLLARHYRVAPFDERYEQEASRKLVFSELYEAGKQTANPWVFEPECPGKSRIFDGRTGDPFEQPVIIGKPYILKLIHQVADKIHGRSSGHYALVTQQPLRGRAKQGGQRVGEMEVWALEGFGVSHILQEMLTYKSDHIRARQEVLGTTISGRTIPKPEDAPESFRLLVRELRSLALELKHFLISEKNFQINRKEV.

It belongs to the RNA polymerase beta chain family. In terms of assembly, in plastids the minimal PEP RNA polymerase catalytic core is composed of four subunits: alpha, beta, beta', and beta''. When a (nuclear-encoded) sigma factor is associated with the core the holoenzyme is formed, which can initiate transcription.

The protein localises to the plastid. It localises to the chloroplast. It carries out the reaction RNA(n) + a ribonucleoside 5'-triphosphate = RNA(n+1) + diphosphate. Its function is as follows. DNA-dependent RNA polymerase catalyzes the transcription of DNA into RNA using the four ribonucleoside triphosphates as substrates. The chain is DNA-directed RNA polymerase subunit beta from Populus alba (White poplar).